Reading from the N-terminus, the 397-residue chain is Phosphopentomutase (397 aa).

6 residues coordinate Mn(2+): Asp-12, Asp-289, His-294, Asp-330, His-331, and His-342.

This sequence belongs to the phosphopentomutase family. It depends on Mn(2+) as a cofactor.

Its subcellular location is the cytoplasm. The catalysed reaction is 2-deoxy-alpha-D-ribose 1-phosphate = 2-deoxy-D-ribose 5-phosphate. The enzyme catalyses alpha-D-ribose 1-phosphate = D-ribose 5-phosphate. Its pathway is carbohydrate degradation; 2-deoxy-D-ribose 1-phosphate degradation; D-glyceraldehyde 3-phosphate and acetaldehyde from 2-deoxy-alpha-D-ribose 1-phosphate: step 1/2. Functionally, isomerase that catalyzes the conversion of deoxy-ribose 1-phosphate (dRib-1-P) and ribose 1-phosphate (Rib-1-P) to deoxy-ribose 5-phosphate (dRib-5-P) and ribose 5-phosphate (Rib-5-P), respectively. The chain is Phosphopentomutase from Limosilactobacillus reuteri (strain DSM 20016) (Lactobacillus reuteri).